A 305-amino-acid chain; its full sequence is Protoheme IX farnesyltransferase (305 aa).

Helical transmembrane passes span 29-49, 51-71, 101-121, 123-143, 151-171, 177-197, 221-241, 244-264, and 283-303; these read VTQLAVFCAIIGMFLATPGMV, WSVLIGGAAGIWLLAGAAFAI, TLIFSAVLGGAGMWLLHVFAN, LTMWLTFATFLGYAVVYTILL, IVIGGLSGAMPPALGWSAVSG, AWFLVLIIFTWTPPHFWALAL, LLHILLYTLIMIAATLLPFVY, SGYIYLVAALGLGLVFLGYAW, and ILYLSLLFAVLLVDHYFKFVP.

Belongs to the UbiA prenyltransferase family. Protoheme IX farnesyltransferase subfamily.

The protein resides in the cell inner membrane. The catalysed reaction is heme b + (2E,6E)-farnesyl diphosphate + H2O = Fe(II)-heme o + diphosphate. The protein operates within porphyrin-containing compound metabolism; heme O biosynthesis; heme O from protoheme: step 1/1. Its function is as follows. Converts heme B (protoheme IX) to heme O by substitution of the vinyl group on carbon 2 of heme B porphyrin ring with a hydroxyethyl farnesyl side group. This is Protoheme IX farnesyltransferase from Cupriavidus metallidurans (strain ATCC 43123 / DSM 2839 / NBRC 102507 / CH34) (Ralstonia metallidurans).